The primary structure comprises 1306 residues: Angiotensin-converting enzyme (1306 aa).

Residues 1 to 28 form the signal peptide; it reads MGAASGRRSPPLLLPLLLLLLPPPPVIL. Topologically, residues 29-1256 are extracellular; it reads ELDPALQPGN…GLNLEEQQAR (1228 aa). 2 consecutive Peptidase M2 domains span residues 40–624 and 643–1222; these read PADE…LGWP and VSDE…LGWP. 5 N-linked (GlcNAc...) asparagine glycosylation sites follow: Asn54, Asn74, Asn111, Asn146, and Asn160. Cys157 and Cys165 are joined by a disulfide. Residue Tyr231 participates in chloride binding. An N-linked (GlcNAc...) asparagine glycan is attached at Asn318. A disulfide bridge connects residues Cys359 and Cys377. His390 is a Zn(2+) binding site. The active-site Proton acceptor 1 is Glu391. Zn(2+) is bound by residues His394 and Glu418. N-linked (GlcNAc...) asparagine glycosylation is found at Asn445 and Asn509. The active-site Proton donor 1 is the His520. N-linked (GlcNAc...) asparagine glycosylation is present at Asn523. Residue Arg529 coordinates chloride. Cys545 and Cys557 are disulfide-bonded. N-linked (GlcNAc...) asparagine glycosylation is found at Asn673, Asn695, Asn714, and Asn760. Cys757 and Cys763 are joined by a disulfide. Residues Arg791 and Tyr829 each coordinate chloride. The N-linked (GlcNAc...) asparagine glycan is linked to Asn942. Cysteines 957 and 975 form a disulfide. His988 is a binding site for Zn(2+). Catalysis depends on Glu989, which acts as the Proton acceptor 2. Zn(2+)-binding residues include His992 and Glu1016. 2 residues coordinate chloride: Trp1090 and Arg1094. His1118 acts as the Proton donor 2 in catalysis. Arg1127 contacts chloride. A disulfide bridge connects residues Cys1143 and Cys1155. Asn1191 and Asn1225 each carry an N-linked (GlcNAc...) asparagine glycan. The segment at 1215 to 1256 is juxtamembrane stalk; sequence HGEKLGWPQYNWTPNSARLEGPFVGSGRVNFLGLNLEEQQAR. The helical transmembrane segment at 1257–1277 threads the bilayer; sequence VGQWVLLFLGVALLVATLGLT. Over 1278–1306 the chain is Cytoplasmic; it reads QRLFSIRHHSLRRPHRGPQFGSEVELRHS. Ser1299 carries the phosphoserine modification.

The protein belongs to the peptidase M2 family. In terms of assembly, monomer and homodimer; homodimerizes following binding to an inhibitor. Interacts with calmodulin (CALM1, CALM2 or CALM3); interaction takes place in the cytoplasmic region and regulates phosphorylation and proteolytic cleavage. It depends on Zn(2+) as a cofactor. The cofactor is chloride. In terms of processing, produced following proteolytic cleavage by secretase enzymes that cleave the transmembrane form in the juxtamembrane stalk region upstream of the transmembrane region. Cleavage can take place at different sites of the juxtamembrane stalk region. Post-translationally, phosphorylated by CK2 on Ser-1299; which allows membrane retention. Phosphorylated on tyrosine residues on its extracellular part, promoting cleavage by secretase enzymes and formation of the soluble form (Angiotensin-converting enzyme, soluble form).

The protein localises to the cell membrane. It is found in the cytoplasm. Its subcellular location is the secreted. The catalysed reaction is Release of a C-terminal dipeptide, oligopeptide-|-Xaa-Yaa, when Xaa is not Pro, and Yaa is neither Asp nor Glu. Thus, conversion of angiotensin I to angiotensin II, with increase in vasoconstrictor activity, but no action on angiotensin II.. It carries out the reaction angiotensin I + H2O = L-histidyl-L-leucine + angiotensin II. The enzyme catalyses bradykinin + H2O = L-Phe-L-Arg + bradykinin(1-7). It catalyses the reaction substance P + H2O = substance P(1-9) + L-Leu-L-Met-NH2. The catalysed reaction is substance P + H2O = substance P(1-8) + Gly-L-Leu-L-Met-NH2. It carries out the reaction substance P + H2O = L-Phe-L-Phe-Gly-L-Leu-L-Met-NH2 + substance P(1-6). The enzyme catalyses neurotensin + H2O = neurotensin(1-11) + L-isoleucyl-L-leucine. It catalyses the reaction goralatide + H2O = N-acetyl-L-seryl-L-aspartate + L-lysyl-L-proline. The catalysed reaction is Met-enkephalin + H2O = L-phenylalanyl-L-methionine + L-tyrosylglycylglycine. It carries out the reaction Leu-enkephalin + H2O = L-tyrosylglycylglycine + L-phenylalanyl-L-leucine. The enzyme catalyses Met-enkephalin-Arg-Phe + H2O = L-arginyl-L-phenylalanine + Met-enkephalin. The dipeptidyl carboxypeptidase activity is strongly activated by chloride. The dipeptidyl carboxypeptidase activity is specifically inhibited by lisinopril, captopril and enalaprilat. Its function is as follows. Dipeptidyl carboxypeptidase that removes dipeptides from the C-terminus of a variety of circulating hormones, such as angiotensin I, bradykinin or enkephalins, thereby playing a key role in the regulation of blood pressure, electrolyte homeostasis or synaptic plasticity. Composed of two similar catalytic domains, each possessing a functional active site, with different selectivity for substrates. Plays a major role in the angiotensin-renin system that regulates blood pressure and sodium retention by the kidney by converting angiotensin I to angiotensin II, resulting in an increase of the vasoconstrictor activity of angiotensin. Also able to inactivate bradykinin, a potent vasodilator, and therefore enhance the blood pressure response. Acts as a regulator of synaptic transmission by mediating cleavage of neuropeptide hormones, such as substance P, neurotensin or enkephalins. Catalyzes degradation of different enkephalin neuropeptides (Met-enkephalin, Leu-enkephalin, Met-enkephalin-Arg-Phe and possibly Met-enkephalin-Arg-Gly-Leu). Acts as a regulator of synaptic plasticity in the nucleus accumbens of the brain by mediating cleavage of Met-enkephalin-Arg-Phe, a strong ligand of Mu-type opioid receptor OPRM1, into Met-enkephalin. Met-enkephalin-Arg-Phe cleavage by ACE decreases activation of OPRM1, leading to long-term synaptic potentiation of glutamate release. Also acts as a regulator of hematopoietic stem cell differentiation by mediating degradation of hemoregulatory peptide N-acetyl-SDKP (AcSDKP). Acts as a regulator of cannabinoid signaling pathway by mediating degradation of hemopressin, an antagonist peptide of the cannabinoid receptor CNR1. Involved in amyloid-beta metabolism by catalyzing degradation of Amyloid-beta protein 40 and Amyloid-beta protein 42 peptides, thereby preventing plaque formation. Catalyzes cleavage of cholecystokinin (maturation of Cholecystokinin-8 and Cholecystokinin-5) and Gonadoliberin-1 (both maturation and degradation) hormones. Degradation of hemoregulatory peptide N-acetyl-SDKP (AcSDKP) and amyloid-beta proteins is mediated by the N-terminal catalytic domain, while angiotensin I and cholecystokinin cleavage is mediated by the C-terminal catalytic region. Functionally, soluble form that is released in blood plasma and other body fluids following proteolytic cleavage in the juxtamembrane stalk region. This is Angiotensin-converting enzyme from Bos taurus (Bovine).